The primary structure comprises 78 residues: Beta-defensin 29 (78 aa).

An N-terminal signal peptide occupies residues 1-23 (MPVTKSYFMTVVVVLILVDETTG). Intrachain disulfides connect cysteine 40–cysteine 67, cysteine 47–cysteine 61, and cysteine 51–cysteine 68.

The protein belongs to the beta-defensin family. In terms of tissue distribution, highly expressed in the cauda epididymis.

The protein localises to the secreted. Has antibacterial activity. The sequence is that of Beta-defensin 29 (Defb29) from Mus musculus (Mouse).